The following is a 449-amino-acid chain: Methionine aminopeptidase 2 (449 aa).

Residues 1–91 form a disordered region; the sequence is MAAQAAPELA…PRIPLTTLFP (91 aa). The span at 34–50 shows a compositional bias: acidic residues; that stretch reads EEAENEGDSEDDRDDEQ. Positions 61–75 are enriched in basic residues; it reads KKKKKKRPKKKKKTA. Residue His-199 coordinates substrate. Asp-219, Asp-230, and His-299 together coordinate a divalent metal cation. Substrate is bound at residue His-307. Glu-335 and Glu-430 together coordinate a divalent metal cation.

The protein belongs to the peptidase M24A family. Methionine aminopeptidase eukaryotic type 2 subfamily. It depends on Co(2+) as a cofactor. Zn(2+) is required as a cofactor. Requires Mn(2+) as cofactor. The cofactor is Fe(2+).

Its subcellular location is the cytoplasm. The catalysed reaction is Release of N-terminal amino acids, preferentially methionine, from peptides and arylamides.. Cotranslationally removes the N-terminal methionine from nascent proteins. The N-terminal methionine is often cleaved when the second residue in the primary sequence is small and uncharged (Met-Ala-, Cys, Gly, Pro, Ser, Thr, or Val). The polypeptide is Methionine aminopeptidase 2 (Trichophyton verrucosum (strain HKI 0517)).